The following is a 222-amino-acid chain: Collectrin (222 aa).

The signal sequence occupies residues methionine 1–alanine 14. At glutamate 15 to proline 141 the chain is on the extracellular side. The region spanning alanine 21–leucine 222 is the Collectrin-like domain. 2 N-linked (GlcNAc...) asparagine glycosylation sites follow: asparagine 76 and asparagine 93. The chain crosses the membrane as a helical span at residues valine 142–valine 162. Over leucine 163–leucine 222 the chain is Cytoplasmic. Threonine 214 and threonine 220 each carry phosphothreonine.

The protein belongs to the CLTRN family. As to quaternary structure, monomer. Homodimer; dimerization prevents CLTRN cleavage by BACE2. Interacts with SLC6A18; this interaction regulates the trafficking of SLC6A18 to the cell membrane and its amino acid transporter activity. Interacts with SLC6A19; this interaction regulates the trafficking of SLC6A19 to the cell membrane and its amino acid transporter activity. Interacts with SNAPIN. Glycosylated. Glycosylation is required for plasma membrane localization and for its cleavage by BACE2. In terms of processing, proteolytically processed in pancreatic beta cells by BACE2 leading to the generation and extracellular release of soluble CLTRN, and a corresponding cell-associated C-terminal fragment which is later cleaved by gamma-secretase. This shedding process inactivates CLTRN. Three cleavage sites have been identified for BACE2, two clustered sites after Phe-116 and Leu-118 and a more membrane proximal site at Phe-125; the preferred BACE2 cleavage site seems to be between Phe-125 and Leu-126, Phe-116 and Leu-118 act as alternative sites. Kidney; collecting ducts. Pancreas; beta cells of islets.

The protein localises to the cell membrane. Plays an important role in amino acid transport by acting as binding partner of amino acid transporters SLC6A18 and SLC6A19, regulating their trafficking on the cell surface and their activity. May also play a role in trafficking of amino acid transporters SLC3A1 and SLC7A9 to the renal cortical cell membrane. Regulator of SNARE complex function. Stimulator of beta cell replication. In Rattus norvegicus (Rat), this protein is Collectrin.